Here is an 881-residue protein sequence, read N- to C-terminus: Probable alpha/beta-glucosidase agdC (881 aa).

Positions 1-14 (MLRSLLLLAPLVGA) are cleaved as a signal peptide. 3 N-linked (GlcNAc...) asparagine glycosylation sites follow: Asn-171, Asn-293, and Asn-373. The active-site Nucleophile is the Asp-422. Residue Glu-425 is part of the active site. Positions 440–485 (YARDNDLPPAAPPVRPSNPRPLPGFPGDFQPSSSSKRSTKGSKVGL) are disordered. Over residues 448–463 (PAAPPVRPSNPRPLPG) the composition is skewed to pro residues. An N-linked (GlcNAc...) asparagine glycan is attached at Asn-506. The active-site Proton donor is Asp-571. 3 N-linked (GlcNAc...) asparagine glycosylation sites follow: Asn-572, Asn-608, and Asn-742.

It belongs to the glycosyl hydrolase 31 family.

Its subcellular location is the secreted. It carries out the reaction Hydrolysis of terminal, non-reducing (1-&gt;4)-linked alpha-D-glucose residues with release of alpha-D-glucose.. The enzyme catalyses Hydrolysis of terminal, non-reducing beta-D-glucosyl residues with release of beta-D-glucose.. Its function is as follows. Glucosidase involved in the degradation of cellulosic biomass. Has both alpha- and beta-glucosidase activity. This chain is Probable alpha/beta-glucosidase agdC (agdC), found in Aspergillus fumigatus (strain CBS 144.89 / FGSC A1163 / CEA10) (Neosartorya fumigata).